The sequence spans 674 residues: Probable nucleolar GTP-binding protein 1 (674 aa).

The region spanning 169–346 (RTLLLTGYPN…VKDTACSILF (178 aa)) is the OBG-type G domain. GTP is bound by residues 175-182 (GYPNVGKS), 221-225 (DTPGI), and 289-292 (NKID). Over residues 518–527 (RINHQIKDSS) the composition is skewed to basic and acidic residues. 2 disordered regions span residues 518 to 538 (RINH…RRGI) and 564 to 674 (VRDH…NDFR). Residues 570-580 (SRISGKKRSRS) are compositionally biased toward basic residues. Composition is skewed to basic and acidic residues over residues 619-633 (GFHD…DKLD) and 641-653 (NQDG…DRHV).

Belongs to the TRAFAC class OBG-HflX-like GTPase superfamily. OBG GTPase family. NOG subfamily.

Its subcellular location is the nucleus. It is found in the nucleolus. In terms of biological role, involved in the biogenesis of the 60S ribosomal subunit. The chain is Probable nucleolar GTP-binding protein 1 (nog1) from Dictyostelium discoideum (Social amoeba).